Consider the following 95-residue polypeptide: AFAGVLADADIKAALAGCAAAESFNYKTFFKACGLAGKFFAIIDQDHSGFIEEDELKLFLQTFSAGARALSDAETKDVDGDGMIGVDEFVALVKA.

Alanine 1 bears the N-acetylalanine mark. EF-hand domains follow at residues 39-66 (FFAI…FSAG) and 77-95 (DVDG…LVKA). Positions 44, 46, 48, 50, 52, 55, 77, 79, 81, 83, and 88 each coordinate Ca(2+).

This sequence belongs to the parvalbumin family.

Its function is as follows. In muscle, parvalbumin is thought to be involved in relaxation after contraction. It binds two calcium ions. In Merluccius paradoxus (Deep-water Cape hake), this protein is Parvalbumin beta 3.